Reading from the N-terminus, the 160-residue chain is Transcriptional regulator MraZ (160 aa).

2 SpoVT-AbrB domains span residues Lys-5–Val-50 and Ala-93–Val-136.

Belongs to the MraZ family. Forms oligomers.

It localises to the cytoplasm. Its subcellular location is the nucleoid. The sequence is that of Transcriptional regulator MraZ from Geobacter sp. (strain M21).